Here is a 475-residue protein sequence, read N- to C-terminus: Equilibrative nucleoside transporter 3 (475 aa).

The Cytoplasmic portion of the chain corresponds to 1–51 (MAFASEDIAYHSSNAVYRVPSNRHEADQEALLGKPLDYPAPGLQRPEDRFN). Ser-21 is modified (phosphoserine). A Dileucine internalization motif motif is present at residues 31–32 (LL). Residues 52-72 (GAYIIFFCLGIGGLLPWNFFV) form a helical membrane-spanning segment. Over 73 to 105 (TAKEYWAFKLRNCSSPASGKDPEDADILNYFES) the chain is Extracellular. N-linked (GlcNAc...) asparagine glycosylation occurs at Asn-84. The chain crosses the membrane as a helical span at residues 106-126 (YLAVASTVPSLLFLVANFLLV). Residues 127 to 132 (NRIRVH) lie on the Cytoplasmic side of the membrane. A helical membrane pass occupies residues 133-153 (VRVLASLSVSLAIFVVMAVLV). The Extracellular portion of the chain corresponds to 154–162 (RVDTSSWTR). A helical transmembrane segment spans residues 163–183 (GFFSIAMACMAIISSSSTIFN). At 184–199 (SSVYGLTGSFPMRNAQ) the chain is on the cytoplasmic side. A helical membrane pass occupies residues 200–220 (ALISGGAMGGTVSAVASLVDL). Over 221–230 (AASSDVRDSA) the chain is Extracellular. Residues 231–251 (LAFFLTAAVFLGLCVGLYLLL) traverse the membrane as a helical segment. The Cytoplasmic portion of the chain corresponds to 252–305 (PQLEYARYYMRPVVPIHVFSSEDSPPRDAPSTSSVAPASRAVHTPPLGPILKKT). The tract at residues 272 to 291 (SEDSPPRDAPSTSSVAPASR) is disordered. A helical membrane pass occupies residues 306–326 (AGLGFCAVFLYFITALIFPAI). At 327–340 (STNIQPMHKGTGSP) the chain is on the extracellular side. A helical membrane pass occupies residues 341–361 (WTSKFYVPLTVFLLFNFADLC). Over 362 to 377 (GRQVTAWIQVPGPRSK) the chain is Cytoplasmic. The chain crosses the membrane as a helical span at residues 378 to 398 (LLPILAVSRVCLVPLFLLCNY). Residues 399–414 (QPRSHLTLVLFQSDIY) lie on the Extracellular side of the membrane. Residues 415 to 437 (PILFTCLLGLSNGYLSTLVLMYG) traverse the membrane as a helical segment. Topologically, residues 438–450 (PKIVPRELAEATS) are cytoplasmic. The chain crosses the membrane as a helical span at residues 451 to 471 (VVMLFYMSLGLMLGSACAALL). The Extracellular segment spans residues 472–475 (EHFI).

Belongs to the SLC29A/ENT transporter (TC 2.A.57) family. As to expression, widely expressed. Highest levels in heart and liver (at protein level).

The protein resides in the lysosome membrane. It is found in the late endosome membrane. The protein localises to the mitochondrion membrane. Its subcellular location is the cell membrane. It carries out the reaction adenosine(in) = adenosine(out). It catalyses the reaction guanosine(in) = guanosine(out). The catalysed reaction is inosine(in) = inosine(out). The enzyme catalyses uridine(out) = uridine(in). It carries out the reaction cytidine(in) = cytidine(out). It catalyses the reaction thymidine(in) = thymidine(out). The catalysed reaction is 2'-deoxyadenosine(in) = 2'-deoxyadenosine(out). The enzyme catalyses 2'-deoxycytidine(in) = 2'-deoxycytidine(out). It carries out the reaction guanine(out) = guanine(in). It catalyses the reaction uracil(in) = uracil(out). The catalysed reaction is (R)-noradrenaline(out) = (R)-noradrenaline(in). The enzyme catalyses dopamine(out) = dopamine(in). It carries out the reaction serotonin(out) = serotonin(in). It catalyses the reaction tyramine(in) = tyramine(out). The catalysed reaction is ATP(in) = ATP(out). Uniporter that mediates the facilitative transport of nucleoside across lysosomal and mitochondrial membranes. Functions as a non-electrogenic Na(+)-independent transporter. Substrate transport is pH-dependent and enhanced under acidic condition, probably reflecting the location of the transporter in acidic intracellular compartments. Proton is not a cotransporting ion but most likely change the ionization state of the transporter which dictates transport-permissible/impermissible conformation for nucleoside translocation. May direct the nucleoside transport from lysosomes to cytosol or cytosol to mitochondria to facilitate the fundamental function of salvage synthesis of nucleic acids. Involved in the transport of nucleosides (adenosine, guanosine, uridine, thymidine, cytidine and inosine) and deoxynucleosides (deoxyadenosine, deoxycytidine). Also mediates transport of purine nucleobases (adenine, guanine) and pyrimidine nucleobases (uracil). Also able to transport monoamine neurotransmitters dopamine, serotonin, noradrenaline and tyramine. Capable of transporting ATP. Mediates nucleoside export from lysosomes in macrophages, which regulates macrophage functions and numbers. The protein is Equilibrative nucleoside transporter 3 of Rattus norvegicus (Rat).